The primary structure comprises 259 residues: Hydroxyacylglutathione hydrolase (259 aa).

Residues His-56, His-58, Asp-60, His-61, His-112, Asp-133, and His-171 each coordinate Zn(2+). A disordered region spans residues 220–243; sequence NPFLRTGETSVKEKADERSDAQNT. Over residues 229–239 the composition is skewed to basic and acidic residues; it reads SVKEKADERSD.

The protein belongs to the metallo-beta-lactamase superfamily. Glyoxalase II family. As to quaternary structure, monomer. Zn(2+) is required as a cofactor.

It carries out the reaction an S-(2-hydroxyacyl)glutathione + H2O = a 2-hydroxy carboxylate + glutathione + H(+). It functions in the pathway secondary metabolite metabolism; methylglyoxal degradation; (R)-lactate from methylglyoxal: step 2/2. Thiolesterase that catalyzes the hydrolysis of S-D-lactoyl-glutathione to form glutathione and D-lactic acid. The sequence is that of Hydroxyacylglutathione hydrolase from Pseudomonas syringae pv. syringae (strain B728a).